The primary structure comprises 284 residues: Tripartite motif-containing protein 12A (284 aa).

The RING-type zinc-finger motif lies at 15–59 (CPVCLNLMVKPVSADCGHTFCQGCITLYFESIKCDKKVFICPVCR). The B box-type zinc finger occupies 91-132 (QKVFNCARHGKKLQLFCRKDMMAICWLCERSQEHRGHKTALI). Residues Cys96, His99, Cys118, and His124 each coordinate Zn(2+). Residues 130-234 (ALIEEVAQEY…QSKLLEDFIS (105 aa)) are a coiled coil.

It belongs to the TRIM/RBCC family. Expressed in embryonic CNS, liver, kidney, olfactory epithelium.

It localises to the cytoplasm. This chain is Tripartite motif-containing protein 12A (Trim12a), found in Mus musculus (Mouse).